The primary structure comprises 72 residues: UPF0426 protein asl4034 (72 aa).

This sequence belongs to the UPF0426 family.

The sequence is that of UPF0426 protein asl4034 from Nostoc sp. (strain PCC 7120 / SAG 25.82 / UTEX 2576).